Consider the following 211-residue polypeptide: ATP phosphoribosyltransferase (211 aa).

This sequence belongs to the ATP phosphoribosyltransferase family. Short subfamily. Heteromultimer composed of HisG and HisZ subunits.

It is found in the cytoplasm. It carries out the reaction 1-(5-phospho-beta-D-ribosyl)-ATP + diphosphate = 5-phospho-alpha-D-ribose 1-diphosphate + ATP. It participates in amino-acid biosynthesis; L-histidine biosynthesis; L-histidine from 5-phospho-alpha-D-ribose 1-diphosphate: step 1/9. Catalyzes the condensation of ATP and 5-phosphoribose 1-diphosphate to form N'-(5'-phosphoribosyl)-ATP (PR-ATP). Has a crucial role in the pathway because the rate of histidine biosynthesis seems to be controlled primarily by regulation of HisG enzymatic activity. This chain is ATP phosphoribosyltransferase, found in Clostridium botulinum (strain 657 / Type Ba4).